A 169-amino-acid chain; its full sequence is Peptide deformylase (169 aa).

Fe cation contacts are provided by C93 and H135. The active site involves E136. H139 is a Fe cation binding site.

This sequence belongs to the polypeptide deformylase family. Fe(2+) is required as a cofactor.

It carries out the reaction N-terminal N-formyl-L-methionyl-[peptide] + H2O = N-terminal L-methionyl-[peptide] + formate. In terms of biological role, removes the formyl group from the N-terminal Met of newly synthesized proteins. Requires at least a dipeptide for an efficient rate of reaction. N-terminal L-methionine is a prerequisite for activity but the enzyme has broad specificity at other positions. This is Peptide deformylase from Aquifex aeolicus (strain VF5).